Consider the following 135-residue polypeptide: Transcriptional activator protein (135 aa).

Positions 17–32 match the Nuclear localization signal motif; sequence KVQHKIAKKKPIRRKR. The segment at 37–54 is a zinc-finger region; it reads CGCSYYLHLNCNNHGFTH. 2 stretches are compositionally biased toward polar residues: residues 77–87 and 101–115; these read LFQDNRTQPEA and IQPQHQEGNGDSQMF. The disordered stretch occupies residues 77–117; it reads LFQDNRTQPEAISNEPRHHFHSDKIQPQHQEGNGDSQMFSR. The segment at 120 to 135 is transactivation; it reads NLDDITASDWSFLKSI.

It belongs to the geminiviridae transcriptional activator protein family. Monomer. Homodimer. Homooligomer. Self-interaction correlates with nuclear localization and efficient activation of transcription. Monomers suppress local silencing by interacting with and inactivating host adenosine kinase 2 (ADK2) in the cytoplasm. Interacts with and inhibits host SNF1 kinase. Binds to ssDNA. May interact with host RPS27A. In terms of processing, phosphorylated.

The protein resides in the host nucleus. Its subcellular location is the host cytoplasm. In terms of biological role, multifunctional protein that modulates host antiviral defenses and promotes host attractiveness to insect vectors. Acts as a suppressor of RNA-mediated gene silencing, also known as post-transcriptional gene silencing (PTGS), a mechanism of plant viral defense that limits the accumulation of viral RNAs. TrAP suppresses the host RNA silencing by inhibiting adenosine kinase 2 (ADK2), a kinase involved in a general methylation pathway. Also suppresses the host basal defense by interacting with and inhibiting SNF1 kinase, a key regulator of cell metabolism implicated in innate antiviral defense. Functionally, inhibits signal transduction by the phytohormone jasmonate, making the infected plant more attractive to aphids, which are the second host to play a role as a dissemination vector. Acts by binding to ubiquitin precursor RPS27A, thereby preventing ubiquitin degradation of JAZ. In Tomato yellow leaf curl virus (strain Israel) (TYLCV), this protein is Transcriptional activator protein.